The chain runs to 31 residues: Cytochrome b6-f complex subunit 6 (31 aa).

Residues 3-23 (VAIDYFLLVGFCFAVTSGLWI) traverse the membrane as a helical segment.

Belongs to the PetL family. The 4 large subunits of the cytochrome b6-f complex are cytochrome b6, subunit IV (17 kDa polypeptide, PetD), cytochrome f and the Rieske protein, while the 4 small subunits are PetG, PetL, PetM and PetN. The complex functions as a dimer.

The protein resides in the plastid. The protein localises to the chloroplast thylakoid membrane. Component of the cytochrome b6-f complex, which mediates electron transfer between photosystem II (PSII) and photosystem I (PSI), cyclic electron flow around PSI, and state transitions. PetL is important for photoautotrophic growth as well as for electron transfer efficiency and stability of the cytochrome b6-f complex. The chain is Cytochrome b6-f complex subunit 6 from Phaeodactylum tricornutum (strain CCAP 1055/1).